Consider the following 216-residue polypeptide: Cytidylate kinase (216 aa).

7–15 (GPSGTGKST) lines the ATP pocket.

Belongs to the cytidylate kinase family. Type 1 subfamily.

The protein localises to the cytoplasm. It carries out the reaction CMP + ATP = CDP + ADP. The enzyme catalyses dCMP + ATP = dCDP + ADP. The chain is Cytidylate kinase from Chlamydia felis (strain Fe/C-56) (Chlamydophila felis).